We begin with the raw amino-acid sequence, 92 residues long: Protein S100-B (92 aa).

Ser-2 is subject to N-acetylserine. EF-hand domains lie at 13–48 and 49–84; these read DVFH…LEEI and KEQE…ITTA. His-16 is a Zn(2+) binding site. Residues Ser-19, Glu-22, and Asp-24 each contribute to the Ca(2+) site. His-26 is a Zn(2+) binding site. 5 residues coordinate Ca(2+): Asp-62, Asp-64, Asp-66, Glu-68, and Glu-73. 2 residues coordinate Zn(2+): His-86 and His-91.

It belongs to the S-100 family. As to quaternary structure, dimer of either two alpha chains, or two beta chains, or one alpha and one beta chain. The S100B dimer binds two molecules of STK38. Interacts with CACYBP in a calcium-dependent manner. Interacts with ATAD3A; this interaction probably occurs in the cytosol prior to ATAD3A mitochondrial targeting. Interacts with S100A6. The S100B dimer interacts with two molecules of CAPZA1. Interacts with AGER. Interacts with PPP5C (via TPR repeats); the interaction is calcium-dependent and modulates PPP5C activity. Interacts with TPPP; this interaction inhibits TPPP dimerization. Interacts with isoform CLSTN3beta of CLSTN3; interaction promotes secretion.

The protein resides in the cytoplasm. It is found in the nucleus. Its subcellular location is the secreted. Small zinc- and- and calcium-binding protein that is highly expressed in astrocytes and constitutes one of the most abundant soluble proteins in brain. Weakly binds calcium but binds zinc very tightly-distinct binding sites with different affinities exist for both ions on each monomer. Physiological concentrations of potassium ion antagonize the binding of both divalent cations, especially affecting high-affinity calcium-binding sites. Acts as a neurotrophic factor that promotes astrocytosis and axonal proliferation. Involved in innervation of thermogenic adipose tissue by acting as an adipocyte-derived neurotrophic factor that promotes sympathetic innervation of adipose tissue. Binds to and initiates the activation of STK38 by releasing autoinhibitory intramolecular interactions within the kinase. Interaction with AGER after myocardial infarction may play a role in myocyte apoptosis by activating ERK1/2 and p53/TP53 signaling. Could assist ATAD3A cytoplasmic processing, preventing aggregation and favoring mitochondrial localization. May mediate calcium-dependent regulation on many physiological processes by interacting with other proteins, such as TPR-containing proteins, and modulating their activity. The sequence is that of Protein S100-B (S100B) from Bos taurus (Bovine).